A 284-amino-acid chain; its full sequence is HTH-type transcriptional activator RhaR (284 aa).

Residues 181–279 form the HTH araC/xylS-type domain; sequence DMLMNALRAS…GVSPSAYRQR (99 aa). 2 consecutive DNA-binding regions (H-T-H motif) follow at residues 198-219 and 246-269; these read EAFC…KEQT and IGDI…HQAF.

As to quaternary structure, binds DNA as a dimer.

It is found in the cytoplasm. In terms of biological role, activates expression of the rhaSR operon in response to L-rhamnose. This is HTH-type transcriptional activator RhaR from Pectobacterium carotovorum subsp. carotovorum (strain PC1).